The following is a 679-amino-acid chain: Stress-70 protein, mitochondrial (679 aa).

The transit peptide at 1–46 directs the protein to the mitochondrion; the sequence is MISASRAAAARLVGAAASRGPTAARHQDSWNGLSHEAFRLVSRRDY. The interaction with NFS1 stretch occupies residues 1–432; the sequence is MISASRAAAA…IQGGVLAGDV (432 aa). 2 residues coordinate ADP: Thr-63 and Asn-64. The tract at residues 63-431 is nucleotide-binding domain (NBD); that stretch reads TNSCVAVMEG…AIQGGVLAGD (369 aa). Lys-76 carries the N6-acetyllysine modification. A Phosphothreonine modification is found at Thr-87. 2 positions are modified to N6-acetyllysine; alternate: Lys-135 and Lys-138. An N6-succinyllysine; alternate mark is found at Lys-135 and Lys-138. Position 143 is an N6-acetyllysine (Lys-143). N6-acetyllysine; alternate is present on Lys-206. Lys-206 is modified (N6-succinyllysine; alternate). Lys-206 carries the N6-malonyllysine; alternate modification. Residues Lys-234 and Lys-288 each carry the N6-acetyllysine modification. Lys-300 is subject to N6-acetyllysine; alternate. Lys-300 carries the post-translational modification N6-succinyllysine; alternate. 3 residues coordinate ADP: Glu-313, Lys-316, and Ser-320. The residue at position 368 (Lys-368) is an N6-succinyllysine. Residues Gly-388 and Arg-391 each coordinate ADP. An N6-succinyllysine modification is found at Lys-394. Ser-408 carries the post-translational modification Phosphoserine. An interdomain linker region spans residues 432-441; sequence VTDVLLLDVT. The interval 432 to 679 is interaction with FXN and ISCU; that stretch reads VTDVLLLDVT…QKEDQKEEKQ (248 aa). Residues 442 to 679 form a substrate-binding domain (SBD) region; sequence PLSLGIETLG…QKEDQKEEKQ (238 aa). Arg-513 carries the post-translational modification Omega-N-methylarginine. Lys-567 and Lys-600 each carry N6-acetyllysine; alternate. N6-succinyllysine; alternate occurs at positions 567 and 600. Lys-610 carries the post-translational modification N6-succinyllysine. Lys-612 is subject to N6-acetyllysine. At Lys-646 the chain carries N6-acetyllysine; alternate. The residue at position 646 (Lys-646) is an N6-succinyllysine; alternate. Residues 656–679 are disordered; sequence ASEREGSGSSGTGEQKEDQKEEKQ. Positions 669–679 are enriched in basic and acidic residues; sequence EQKEDQKEEKQ.

Belongs to the heat shock protein 70 family. As to quaternary structure, interacts strongly with the intermediate form of FXN and weakly with its mature form. Interacts with HSCB. Associates with the mitochondrial contact site and cristae organizing system (MICOS) complex, composed of at least MICOS10/MIC10, CHCHD3/MIC19, CHCHD6/MIC25, APOOL/MIC27, IMMT/MIC60, APOO/MIC23/MIC26 and QIL1/MIC13. This complex was also known under the names MINOS or MitOS complex. The MICOS complex associates with mitochondrial outer membrane proteins SAMM50, MTX1, MTX2 and DNAJC11, mitochondrial inner membrane protein TMEM11 and with HSPA9. Interacts with DNLZ, the interaction is required to prevent self-aggregation. Interacts with TESPA1. Interacts with PDPN. Interacts with NFU1, NFS1 and ISCU. Interacts with TP53; the interaction promotes TP53 degradation. Interacts (via SBD domain) with UBXN2A; the interaction with UBXN2A inhibits HSPA9 interaction with and degradation of TP53, thereby promotes TP53 translocation to the nucleus. Interacts with ITPR1 AND VDAC1; this interaction couples ITPR1 to VDAC1. Component of the TIM23 mitochondrial inner membrane pre-sequence translocase complex.

Its subcellular location is the mitochondrion. It localises to the nucleus. It is found in the nucleolus. The protein localises to the cytoplasm. The protein resides in the mitochondrion matrix. It carries out the reaction ATP + H2O = ADP + phosphate + H(+). With respect to regulation, the chaperone activity is regulated by ATP-induced allosteric coupling of the nucleotide-binding (NBD) and substrate-binding (SBD) domains. ATP binding in the NBD leads to a conformational change in the NBD, which is transferred through the interdomain linker (IDL) to the substrate-binding domain (SBD). This elicits a reduced substrate affinity and a faster substrate exchange rate. Upon hydrolysis of ATP to ADP, the protein undergoes a conformational change that increases its affinity for substrate proteins. It cycles through repeated phases of ATP hydrolysis and nucleotide exchange, facilitating repeated cycles of substrate binding and release. Functions in collaboration with co-chaperones. Functions with the co-chaperone, DNLZ, to maintain solubility and regulate ATP hydrolysis. Nucleotide exchange factors, GRPEL1 and GRPEL2, accelerate nucleotide exchange. Functionally, mitochondrial chaperone that plays a key role in mitochondrial protein import, folding, and assembly. Plays an essential role in the protein quality control system, the correct folding of proteins, the re-folding of misfolded proteins, and the targeting of proteins for subsequent degradation. These processes are achieved through cycles of ATP binding, ATP hydrolysis, and ADP release, mediated by co-chaperones. In mitochondria, it associates with the TIM (translocase of the inner membrane) protein complex to assist in the import and folding of mitochondrial proteins. Plays an important role in mitochondrial iron-sulfur cluster (ISC) biogenesis, interacts with and stabilizes ISC cluster assembly proteins FXN, NFU1, NFS1 and ISCU. Regulates erythropoiesis via stabilization of ISC assembly. Regulates mitochondrial calcium-dependent apoptosis by coupling two calcium channels, ITPR1 and VDAC1, at the mitochondria-associated endoplasmic reticulum (ER) membrane to facilitate calcium transport from the ER lumen to the mitochondria intermembrane space, providing calcium for the downstream calcium channel MCU, which releases it into the mitochondrial matrix. Although primarily located in the mitochondria, it is also found in other cellular compartments. In the cytosol, it associates with proteins involved in signaling, apoptosis, or senescence. It may play a role in cell cycle regulation via its interaction with and promotion of degradation of TP53. May play a role in the control of cell proliferation and cellular aging. Protects against reactive oxygen species (ROS). Extracellular HSPA9 plays a cytoprotective role by preventing cell lysis following immune attack by the membrane attack complex by disrupting formation of the complex. The protein is Stress-70 protein, mitochondrial of Homo sapiens (Human).